The chain runs to 491 residues: Probable glycine dehydrogenase (decarboxylating) subunit 2 (491 aa).

Residue Lys264 is modified to N6-(pyridoxal phosphate)lysine.

Belongs to the GcvP family. C-terminal subunit subfamily. The glycine cleavage system is composed of four proteins: P, T, L and H. In this organism, the P 'protein' is a heterodimer of two subunits. The cofactor is pyridoxal 5'-phosphate.

The enzyme catalyses N(6)-[(R)-lipoyl]-L-lysyl-[glycine-cleavage complex H protein] + glycine + H(+) = N(6)-[(R)-S(8)-aminomethyldihydrolipoyl]-L-lysyl-[glycine-cleavage complex H protein] + CO2. Its function is as follows. The glycine cleavage system catalyzes the degradation of glycine. The P protein binds the alpha-amino group of glycine through its pyridoxal phosphate cofactor; CO(2) is released and the remaining methylamine moiety is then transferred to the lipoamide cofactor of the H protein. In Coxiella burnetii (strain CbuK_Q154) (Coxiella burnetii (strain Q154)), this protein is Probable glycine dehydrogenase (decarboxylating) subunit 2.